A 165-amino-acid chain; its full sequence is UI (165 aa).

The signal sequence occupies residues 1–18 (MKPVPLILLLATVLLSSH). A Valine amide modification is found at V163.

The protein belongs to the sauvagine/corticotropin-releasing factor/urotensin I family.

The protein localises to the secreted. Functionally, urotensin is found in the teleost caudal neurosecretory system. It has a suggested role in osmoregulation and as a corticotropin-releasing factor. The non-hormonal portion of this precursor may be a urotensin binding protein, urophysin. The chain is UI from Oncorhynchus mykiss (Rainbow trout).